Consider the following 152-residue polypeptide: ESAT-6 secretion machinery protein EssA (152 aa).

At 1–114 (MLMNSVIALT…PYIQNKQEKK (114 aa)) the chain is on the cytoplasmic side. Residues 115–135 (IFPYILMSVGAFLTLGFVIFS) form a helical membrane-spanning segment. The Extracellular portion of the chain corresponds to 136-152 (IHKGRRTKNESARKSNI).

The protein belongs to the EssA family.

It is found in the cell membrane. Functionally, component of the ESAT-6 secretion system (Ess). Required for the secretion of EsxA and EsxB. This Staphylococcus aureus (strain Mu50 / ATCC 700699) protein is ESAT-6 secretion machinery protein EssA.